Reading from the N-terminus, the 460-residue chain is Squalene synthase (460 aa).

A helical membrane pass occupies residues 425-445 (ISILFVFFIILVCLAVIFYVF).

This sequence belongs to the phytoene/squalene synthase family. As to quaternary structure, interacts with pof14. Mg(2+) serves as cofactor.

It is found in the endoplasmic reticulum membrane. The catalysed reaction is 2 (2E,6E)-farnesyl diphosphate + NADPH + H(+) = squalene + 2 diphosphate + NADP(+). It catalyses the reaction 2 (2E,6E)-farnesyl diphosphate + NADH + H(+) = squalene + 2 diphosphate + NAD(+). It functions in the pathway terpene metabolism; lanosterol biosynthesis; lanosterol from farnesyl diphosphate: step 1/3. It participates in steroid metabolism; ergosterol biosynthesis. Functionally, squalene synthase; part of the third module of ergosterol biosynthesis pathway that includes by the late steps of the pathway. Erg9 produces squalene from 2 farnesyl pyrophosphate moieties. The third module or late pathway involves the ergosterol synthesis itself through consecutive reactions that mainly occur in the endoplasmic reticulum (ER) membrane. Firstly, the squalene synthase erg9 catalyzes the condensation of 2 farnesyl pyrophosphate moieties to form squalene, which is the precursor of all steroids. Secondly, squalene is converted into lanosterol by the consecutive action of the squalene epoxidase erg1 and the lanosterol synthase erg7. The lanosterol 14-alpha-demethylase erg11/cyp1 catalyzes C14-demethylation of lanosterol to produce 4,4'-dimethyl cholesta-8,14,24-triene-3-beta-ol. In the next steps, a complex process involving various demethylation, reduction and desaturation reactions catalyzed by the C-14 reductase erg24 and the C-4 demethylation complex erg25-erg26-erg27 leads to the production of zymosterol. Erg28 likely functions in the C-4 demethylation complex reaction by tethering erg26 and Erg27 to the endoplasmic reticulum or to facilitate interaction between these proteins. Then, the sterol 24-C-methyltransferase erg6 catalyzes the methyl transfer from S-adenosyl-methionine to the C-24 of zymosterol to form fecosterol. The C-8 sterol isomerase erg2 catalyzes the reaction which results in unsaturation at C-7 in the B ring of sterols and thus converts fecosterol to episterol. The sterol-C5-desaturases erg31 and erg32 then catalyze the introduction of a C-5 double bond in the B ring to produce 5-dehydroepisterol. The C-22 sterol desaturase erg5 further converts 5-dehydroepisterol into ergosta-5,7,22,24(28)-tetraen-3beta-ol by forming the C-22(23) double bond in the sterol side chain. Finally, ergosta-5,7,22,24(28)-tetraen-3beta-ol is substrate of the C-24(28) sterol reductase erg4 to produce ergosterol. In the genus Schizosaccharomyces, a second route exists between lanosterol and fecosterol, via the methylation of lanosterol to eburicol by erg6, followed by C14-demethylation by erg11/cyp1 and C4-demethylation by the demethylation complex erg25-erg26-erg27. The protein is Squalene synthase of Schizosaccharomyces pombe (strain 972 / ATCC 24843) (Fission yeast).